The sequence spans 565 residues: NAD-dependent malic enzyme (565 aa).

Tyrosine 104 (proton donor) is an active-site residue. Arginine 157 lines the NAD(+) pocket. Lysine 175 functions as the Proton acceptor in the catalytic mechanism. Positions 246, 247, and 270 each coordinate a divalent metal cation. The NAD(+) site is built by aspartate 270 and asparagine 418.

This sequence belongs to the malic enzymes family. As to quaternary structure, homotetramer. Mg(2+) serves as cofactor. The cofactor is Mn(2+).

The enzyme catalyses (S)-malate + NAD(+) = pyruvate + CO2 + NADH. It carries out the reaction oxaloacetate + H(+) = pyruvate + CO2. The polypeptide is NAD-dependent malic enzyme (Sodalis glossinidius (strain morsitans)).